A 91-amino-acid polypeptide reads, in one-letter code: DNA-binding protein HU (91 aa).

The protein belongs to the bacterial histone-like protein family.

Functionally, histone-like DNA-binding protein which is capable of wrapping DNA to stabilize it, and thus to prevent its denaturation under extreme environmental conditions. Also seems to act as a fortuitous virulence factor in delayed sequelae by binding to heparan sulfate-proteoglycans in the extracellular matrix of target organs and acting as a nidus for in situ immune complex formation. In Streptococcus downei (Streptococcus sobrinus), this protein is DNA-binding protein HU (hup).